Reading from the N-terminus, the 396-residue chain is 1-deoxy-D-xylulose 5-phosphate reductoisomerase (396 aa).

Positions 15, 16, 17, 18, 41, and 129 each coordinate NADPH. Lys-130 contributes to the 1-deoxy-D-xylulose 5-phosphate binding site. Glu-131 is an NADPH binding site. Asp-155 is a Mn(2+) binding site. 1-deoxy-D-xylulose 5-phosphate contacts are provided by Ser-156, Glu-157, Ser-182, and His-205. Glu-157 contributes to the Mn(2+) binding site. Gly-211 provides a ligand contact to NADPH. Residues Ser-218, Asn-223, Lys-224, and Glu-227 each coordinate 1-deoxy-D-xylulose 5-phosphate. Residue Glu-227 coordinates Mn(2+).

Belongs to the DXR family. It depends on Mg(2+) as a cofactor. Requires Mn(2+) as cofactor.

It catalyses the reaction 2-C-methyl-D-erythritol 4-phosphate + NADP(+) = 1-deoxy-D-xylulose 5-phosphate + NADPH + H(+). It functions in the pathway isoprenoid biosynthesis; isopentenyl diphosphate biosynthesis via DXP pathway; isopentenyl diphosphate from 1-deoxy-D-xylulose 5-phosphate: step 1/6. Functionally, catalyzes the NADPH-dependent rearrangement and reduction of 1-deoxy-D-xylulose-5-phosphate (DXP) to 2-C-methyl-D-erythritol 4-phosphate (MEP). The chain is 1-deoxy-D-xylulose 5-phosphate reductoisomerase from Xanthomonas oryzae pv. oryzae (strain MAFF 311018).